The following is a 715-amino-acid chain: Poly(A) polymerase alpha-A (715 aa).

ATP-binding positions include 82 to 84 (FGP), T91, 95 to 97 (DID), D149, K210, Y219, and 228 to 229 (GV). Positions 95, 97, and 149 each coordinate Mg(2+). The short motif at 472 to 489 (RKQLHQLQPSHVSPKKKK) is the Nuclear localization signal 1 element. Disordered regions lie at residues 510–543 (DSDN…PAAP), 560–590 (QNNS…TPKP), and 607–693 (KPVS…DLSD). 2 stretches are compositionally biased toward polar residues: residues 515–539 (MSVP…QGNS) and 560–588 (QNNS…SSTP). Residues 624-639 (KRTSSPSNEDSPKKNK) carry the Nuclear localization signal 2 motif. A compositionally biased stretch (basic and acidic residues) spans 655–673 (DQNKLETEELKEVHSEEKS). Positions 674–692 (SSPVPGSLPFSQQSSTDLS) are enriched in polar residues.

This sequence belongs to the poly(A) polymerase family. As to quaternary structure, monomer. Mg(2+) serves as cofactor. It depends on Mn(2+) as a cofactor.

It localises to the nucleus. The enzyme catalyses RNA(n) + ATP = RNA(n)-3'-adenine ribonucleotide + diphosphate. Functionally, polymerase that creates the 3'-poly(A) tail of mRNA's. May acquire specificity through interaction with a cleavage and polyadenylation factor (CPSF). The sequence is that of Poly(A) polymerase alpha-A (papola-a) from Xenopus laevis (African clawed frog).